We begin with the raw amino-acid sequence, 1939 residues long: Myosin-1 (1939 aa).

A Myosin N-terminal SH3-like domain is found at 33-82 (DAKTSVFVAEPKESFVKGTVQSREGGKVTVKTEAGATLTVKEDQVFPMNP). Residues Thr-64 and Thr-69 each carry the phosphothreonine modification. Positions 86–782 (DKIEDMAMMT…LLGLLEEMRD (697 aa)) constitute a Myosin motor domain. Lys-130 is subject to N6,N6,N6-trimethyllysine. ATP is bound at residue 179-186 (GESGAGKT). Residue Tyr-389 is modified to Phosphotyrosine. Position 392 is a phosphoserine (Ser-392). Thr-419 is modified (phosphothreonine). Residue Tyr-424 is modified to Phosphotyrosine. Ser-625 bears the Phosphoserine mark. The actin-binding stretch occupies residues 659 to 681 (LNKLMTNLRSTHPHFVRCIIPNE). His-757 bears the Pros-methylhistidine mark. An actin-binding region spans residues 761–775 (KFGHTKVFFKAGLLG). The IQ domain occupies 785 to 814 (LAQLITRTQARCRGFLARVEYQKMVERRES). A coiled-coil region spans residues 843 to 1939 (LLKSAETEKE…EVHTKIISEE (1097 aa)). A phosphoserine mark is found at Ser-1092 and Ser-1096. Disordered regions lie at residues 1125–1147 (EIEA…SREL) and 1153–1172 (RLEE…KKRE). The span at 1128–1147 (AERASRAKAEKQRSDLSREL) shows a compositional bias: basic and acidic residues. Phosphoserine occurs at positions 1162 and 1237. Position 1241 is a phosphothreonine (Thr-1241). Ser-1243 is subject to Phosphoserine. Thr-1255 carries the post-translational modification Phosphothreonine. Ser-1261 carries the post-translational modification Phosphoserine. 2 positions are modified to phosphothreonine: Thr-1265 and Thr-1286. 4 positions are modified to phosphoserine: Ser-1288, Ser-1292, Ser-1303, and Ser-1306. Tyr-1464 is subject to Phosphotyrosine. Position 1467 is a phosphothreonine (Thr-1467). Ser-1474 is modified (phosphoserine). Tyr-1492 bears the Phosphotyrosine mark. At Ser-1495 the chain carries Phosphoserine. Position 1501 is a phosphothreonine (Thr-1501). Residue Ser-1514 is modified to Phosphoserine. The residue at position 1517 (Thr-1517) is a Phosphothreonine. Phosphoserine occurs at positions 1554, 1574, 1600, 1603, 1714, and 1726. A phosphothreonine mark is found at Thr-1730 and Thr-1736. Ser-1739 bears the Phosphoserine mark.

The protein belongs to the TRAFAC class myosin-kinesin ATPase superfamily. Myosin family. Muscle myosin is a hexameric protein that consists of 2 heavy chain subunits (MHC), 2 alkali light chain subunits (MLC) and 2 regulatory light chain subunits (MLC-2). Interacts with SLC26A5.

The protein resides in the cytoplasm. It localises to the myofibril. Required for normal hearing. It plays a role in cochlear amplification of auditory stimuli, likely through the positive regulation of prestin (SLC26A5) activity and outer hair cell (OHC) electromotility. The chain is Myosin-1 (MYH1) from Canis lupus familiaris (Dog).